The primary structure comprises 131 residues: Small ribosomal subunit protein uS11 (131 aa).

It belongs to the universal ribosomal protein uS11 family. In terms of assembly, part of the 30S ribosomal subunit. Interacts with proteins S7 and S18. Binds to IF-3.

Located on the platform of the 30S subunit, it bridges several disparate RNA helices of the 16S rRNA. Forms part of the Shine-Dalgarno cleft in the 70S ribosome. This chain is Small ribosomal subunit protein uS11, found in Saccharophagus degradans (strain 2-40 / ATCC 43961 / DSM 17024).